The following is a 721-amino-acid chain: MTAKKQGAQASASAPSGDSPAERAQWLREELERYSYQYYVLDAPTIPDADYDALFIELQALEAEHPELLTPDSPTQRVGGAPLSAFDSVRHRVPMLSLNNGFEDEDVINFDRRCAQGLGRATAAAPAAFATPAAPADDLFSAADAAEAAANTAGNAVEYACELKFDGLAMSLRYENGTLVQAATRGDGETGEDVTANVRTIKAIPLKLRGTAPSVLEVRGEVFMYRADFDKLNARQAESGEKTFVNPRNAAAGSLRQLDPRITAKRPLSFFAYGVGEMEGFDRPGTHSAMLDGFAKLGLPVCDERRVVRGAQGLLSFHREVGERRDQLPYDIDGVVYKVNAIAEQEQLGFVSRAPRFALAHKFPAQEMTTTVEDIEVQVGRTGAITPVARLAPVFVGGVTVTNATLHNEDEIRRKDVHIGDTVIVRRAGDVIPEVVAVVLERRPADARAFVMPTECPVCGSHVERLEGEAIARCTGGLICAAQRKQALLHFAQRRAMDIEGLGDKVVEQLVDLGIVRTPADLYKLGVAKLAALDRMADKSASNLVAAIEQSRETTMNRFIFALGIRHVGEATAKDLAKHFGKLDNLLAADEAALLEVNDVGPVVAQSIANFIAEPHNVEVIEQLRAAGVHWAETEPTARAPLPLAGKTFVLTGTLPTMSREDAKEKLEAAGAKVAGSVSKKTDYVVAGAEAGSKLEKAQTLGVAVLDEEGMLKLLAEVGAA.

Residues methionine 1 to serine 19 are compositionally biased toward low complexity. A disordered region spans residues methionine 1 to arginine 23. NAD(+)-binding positions include aspartate 48–aspartate 52, serine 97–leucine 98, and glutamate 162. Catalysis depends on lysine 164, which acts as the N6-AMP-lysine intermediate. Arginine 185, glutamate 221, lysine 338, and lysine 362 together coordinate NAD(+). Zn(2+)-binding residues include cysteine 456, cysteine 459, cysteine 474, and cysteine 480. The BRCT domain maps to arginine 639–alanine 721.

This sequence belongs to the NAD-dependent DNA ligase family. LigA subfamily. Mg(2+) is required as a cofactor. Requires Mn(2+) as cofactor.

The catalysed reaction is NAD(+) + (deoxyribonucleotide)n-3'-hydroxyl + 5'-phospho-(deoxyribonucleotide)m = (deoxyribonucleotide)n+m + AMP + beta-nicotinamide D-nucleotide.. In terms of biological role, DNA ligase that catalyzes the formation of phosphodiester linkages between 5'-phosphoryl and 3'-hydroxyl groups in double-stranded DNA using NAD as a coenzyme and as the energy source for the reaction. It is essential for DNA replication and repair of damaged DNA. The sequence is that of DNA ligase from Cupriavidus metallidurans (strain ATCC 43123 / DSM 2839 / NBRC 102507 / CH34) (Ralstonia metallidurans).